We begin with the raw amino-acid sequence, 520 residues long: Laccase-1 (520 aa).

A signal peptide spans 1–19 (MRLSNALVLVAACISSVVA). Plastocyanin-like domains follow at residues 21–145 (TRTF…FIVY), 157–305 (VDDE…LTLA), and 375–488 (TVPV…FAEA). Residues H82 and H84 each coordinate Cu cation. Intrachain disulfides connect C103–C509 and C135–C229. N-linked (GlcNAc...) asparagine glycosylation occurs at N108. Residues H127 and H129 each coordinate Cu cation. 2 N-linked (GlcNAc...) asparagine glycosylation sites follow: N239 and N299. Residues H417, H420, H422, H470, C471, H472, and H476 each coordinate Cu cation. N-linked (GlcNAc...) asparagine glycosylation is present at N492.

Belongs to the multicopper oxidase family. It depends on Cu cation as a cofactor.

It localises to the secreted. The enzyme catalyses 4 hydroquinone + O2 = 4 benzosemiquinone + 2 H2O. Functionally, lignin degradation and detoxification of lignin-derived products. The sequence is that of Laccase-1 (lcc1) from Agaricus bisporus (White button mushroom).